Here is a 391-residue protein sequence, read N- to C-terminus: MSLNPRDVVVVDCVRTPMGRAKNGCFRNVRAETLSAALIEALFERNPKLDPKEVEDVIWGCVNQTKEQGFNVARQISLLTRIPHESAAQTVNRLCGSAMSAIHTAAQAIQTGNGDVFLVGGVEHMGHVPMTEGFDHNPAASKYSAKASNMMGLTAEMLAKMHGITREQQDEFGARSHRLAHEATQEGRFKNEIVPIEGHDENGFVKLIEEDETIRPETTAESLGQLRPAFDPKNGTVTAGTSSQLTDGASAMVLMSAERAEALGLTPIAKIRSMAVAGCDPAIMGYGPVPATKKALKRAGLKVEDIDFWELNEAFAGQSLPVLKDLKLLGVMEEKVNLNGGAIALGHPLGCSGARISTTLLNIMQAKGGKLGVSTMCIGLGQGIATVWERI.

Cys-95 (acyl-thioester intermediate) is an active-site residue. Residues His-347 and Cys-377 each act as proton acceptor in the active site.

It belongs to the thiolase-like superfamily. Thiolase family. In terms of assembly, heterotetramer of two alpha chains (FadB) and two beta chains (FadA).

It is found in the cytoplasm. It catalyses the reaction an acyl-CoA + acetyl-CoA = a 3-oxoacyl-CoA + CoA. It participates in lipid metabolism; fatty acid beta-oxidation. Its function is as follows. Catalyzes the final step of fatty acid oxidation in which acetyl-CoA is released and the CoA ester of a fatty acid two carbons shorter is formed. The protein is 3-ketoacyl-CoA thiolase of Marinobacter nauticus (strain ATCC 700491 / DSM 11845 / VT8) (Marinobacter aquaeolei).